Reading from the N-terminus, the 158-residue chain is 2-C-methyl-D-erythritol 2,4-cyclodiphosphate synthase (158 aa).

Asp-9 and His-11 together coordinate a divalent metal cation. 4-CDP-2-C-methyl-D-erythritol 2-phosphate contacts are provided by residues 9 to 11 (DVH) and 35 to 36 (HS). His-43 contributes to the a divalent metal cation binding site. 4-CDP-2-C-methyl-D-erythritol 2-phosphate is bound by residues 57–59 (DIG), 62–66 (FPDTD), 101–107 (AQAPKMA), 133–136 (TTTE), Phe-140, and Arg-143.

This sequence belongs to the IspF family. In terms of assembly, homotrimer. A divalent metal cation serves as cofactor.

It catalyses the reaction 4-CDP-2-C-methyl-D-erythritol 2-phosphate = 2-C-methyl-D-erythritol 2,4-cyclic diphosphate + CMP. It functions in the pathway isoprenoid biosynthesis; isopentenyl diphosphate biosynthesis via DXP pathway; isopentenyl diphosphate from 1-deoxy-D-xylulose 5-phosphate: step 4/6. Its function is as follows. Involved in the biosynthesis of isopentenyl diphosphate (IPP) and dimethylallyl diphosphate (DMAPP), two major building blocks of isoprenoid compounds. Catalyzes the conversion of 4-diphosphocytidyl-2-C-methyl-D-erythritol 2-phosphate (CDP-ME2P) to 2-C-methyl-D-erythritol 2,4-cyclodiphosphate (ME-CPP) with a corresponding release of cytidine 5-monophosphate (CMP). The polypeptide is 2-C-methyl-D-erythritol 2,4-cyclodiphosphate synthase (Vibrio vulnificus (strain CMCP6)).